A 153-amino-acid polypeptide reads, in one-letter code: Ribosome maturation factor RimP (153 aa).

It belongs to the RimP family.

The protein localises to the cytoplasm. Required for maturation of 30S ribosomal subunits. This is Ribosome maturation factor RimP from Marinobacter nauticus (strain ATCC 700491 / DSM 11845 / VT8) (Marinobacter aquaeolei).